The sequence spans 788 residues: Elongator complex protein 2 (788 aa).

8 WD repeats span residues 13 to 51 (GANK…NKGV), 57 to 96 (GHEA…HLQC), 102 to 139 (HYSK…DEFG), 200 to 243 (GHED…LIDD), 279 to 318 (GHDD…GIWV), 336 to 377 (GSSG…ICDQ), 383 to 422 (GATK…ASGR), and 437 to 475 (IHGY…AGML). A disordered region spans residues 490–530 (PDSATVPVLGLSNKAGEDDANEDDEEEEGGNKETPDITDPL). Ser492 carries the phosphoserine modification. The span at 507 to 517 (DDANEDDEEEE) shows a compositional bias: acidic residues. WD repeat units lie at residues 556–600 (GHGF…EIKP), 604–643 (FHSL…NTFE), 651–692 (PHTR…ADDY), 699–742 (KHTK…FELI), and 750–788 (TPAD…LAYE).

Belongs to the WD repeat ELP2 family. As to quaternary structure, component of the elongator complex which consists of ELP1/IKI3, ELP2, ELP3, ELP4, ELP5/IKI1 and ELP6. The elongator complex is composed of two copies of the Elp123 subcomplex (composed of ELP1/IKI3, ELP2 and ELP3) and two copies of the Elp456 subcomplex (composed of ELP4, ELP5/IKI1 and ELP6). The Elp123 subcomplex forms a two-lobed scaffold, which binds the Elp456 subcomplex asymmetrically. In the complex, ELP2 interacts with ELP1/IKI3. In each lobe, ELP2 is tightly sandwiched between ELP1/IKI3 and ELP3. The Elp123 subcomplex binds tRNA through ELP1/IKI3 and ELP3 and can bind 2 tRNAs simultaneously. tRNA-binding induces conformational rearrangements which precisely position the targeted anticodon base in the active site. The Elp456 subcomplex binds tRNA and has ATPase activity. Interacts with KTI11/DPH3.

The protein resides in the cytoplasm. The protein localises to the nucleus. It participates in tRNA modification; 5-methoxycarbonylmethyl-2-thiouridine-tRNA biosynthesis. In terms of biological role, component of the elongator complex, a multiprotein complex which is required for multiple tRNA modifications, including mcm5U (5-methoxycarbonylmethyl uridine), mcm5s2U (5-methoxycarbonylmethyl-2-thiouridine), and ncm5U (5-carbamoylmethyl uridine). The elongator complex catalyzes formation of carboxymethyluridine in the wobble base at position 34 in tRNAs. It functions as a gamma-toxin target (TOT); disruption of the complex confers resistance to Kluyveromyces lactis toxin zymocin (pGKL1 killer toxin). May also be involved in sensitivity to Pichia inositovora toxin. ELP2 binds to microtubules. Independently, ELP2 may be involved in polarized exocytosis. The protein is Elongator complex protein 2 (ELP2) of Saccharomyces cerevisiae (strain ATCC 204508 / S288c) (Baker's yeast).